We begin with the raw amino-acid sequence, 181 residues long: ATP synthase subunit delta (181 aa).

It belongs to the ATPase delta chain family. F-type ATPases have 2 components, F(1) - the catalytic core - and F(0) - the membrane proton channel. F(1) has five subunits: alpha(3), beta(3), gamma(1), delta(1), epsilon(1). F(0) has three main subunits: a(1), b(2) and c(10-14). The alpha and beta chains form an alternating ring which encloses part of the gamma chain. F(1) is attached to F(0) by a central stalk formed by the gamma and epsilon chains, while a peripheral stalk is formed by the delta and b chains.

It is found in the cell inner membrane. Functionally, f(1)F(0) ATP synthase produces ATP from ADP in the presence of a proton or sodium gradient. F-type ATPases consist of two structural domains, F(1) containing the extramembraneous catalytic core and F(0) containing the membrane proton channel, linked together by a central stalk and a peripheral stalk. During catalysis, ATP synthesis in the catalytic domain of F(1) is coupled via a rotary mechanism of the central stalk subunits to proton translocation. This protein is part of the stalk that links CF(0) to CF(1). It either transmits conformational changes from CF(0) to CF(1) or is implicated in proton conduction. This is ATP synthase subunit delta from Fervidobacterium nodosum (strain ATCC 35602 / DSM 5306 / Rt17-B1).